Reading from the N-terminus, the 1286-residue chain is DNA-directed RNA polymerase subunit beta' (1286 aa).

The Zn(2+) site is built by C58, C60, C73, and C76. 3 residues coordinate Mg(2+): D533, D535, and D537. Positions 867, 944, 951, and 954 each coordinate Zn(2+).

Belongs to the RNA polymerase beta' chain family. In terms of assembly, the RNAP catalytic core consists of 2 alpha, 1 beta, 1 beta' and 1 omega subunit. When a sigma factor is associated with the core the holoenzyme is formed, which can initiate transcription. Mg(2+) is required as a cofactor. It depends on Zn(2+) as a cofactor.

It catalyses the reaction RNA(n) + a ribonucleoside 5'-triphosphate = RNA(n+1) + diphosphate. DNA-dependent RNA polymerase catalyzes the transcription of DNA into RNA using the four ribonucleoside triphosphates as substrates. This chain is DNA-directed RNA polymerase subunit beta', found in Tropheryma whipplei (strain TW08/27) (Whipple's bacillus).